A 176-amino-acid polypeptide reads, in one-letter code: ATP-dependent protease subunit HslV (176 aa).

Residue T2 is part of the active site. Residues G157, C160, and T163 each coordinate Na(+).

This sequence belongs to the peptidase T1B family. HslV subfamily. As to quaternary structure, a double ring-shaped homohexamer of HslV is capped on each side by a ring-shaped HslU homohexamer. The assembly of the HslU/HslV complex is dependent on binding of ATP.

It is found in the cytoplasm. The catalysed reaction is ATP-dependent cleavage of peptide bonds with broad specificity.. Its activity is regulated as follows. Allosterically activated by HslU binding. Its function is as follows. Protease subunit of a proteasome-like degradation complex believed to be a general protein degrading machinery. The polypeptide is ATP-dependent protease subunit HslV (Klebsiella pneumoniae (strain 342)).